The primary structure comprises 663 residues: DNA topoisomerase 4 subunit B (663 aa).

Residues Tyr-7, Asn-47, Asp-74, 114–120 (GLHGVGA), and Lys-341 contribute to the ATP site. Positions 386–416 (REAARKAREDARSGKKNKRKDTLLSGKLTPA) are disordered. The segment covering 387–398 (EAARKAREDARS) has biased composition (basic and acidic residues). The 115-residue stretch at 424-538 (NELYLVEGDS…AGRVFIALPP (115 aa)) folds into the Toprim domain. Mg(2+)-binding residues include Glu-430, Asp-503, and Asp-505.

This sequence belongs to the type II topoisomerase family. ParE type 2 subfamily. Heterotetramer composed of ParC and ParE. Mg(2+) serves as cofactor. Mn(2+) is required as a cofactor. The cofactor is Ca(2+).

It catalyses the reaction ATP-dependent breakage, passage and rejoining of double-stranded DNA.. In terms of biological role, topoisomerase IV is essential for chromosome segregation. It relaxes supercoiled DNA. Performs the decatenation events required during the replication of a circular DNA molecule. The sequence is that of DNA topoisomerase 4 subunit B from Staphylococcus aureus (strain Mu50 / ATCC 700699).